The sequence spans 552 residues: Probable beta-glucosidase btgE (552 aa).

Positions 1 to 18 (MRGAILATAAALAGTAMA) are cleaved as a signal peptide. The disordered stretch occupies residues 250–291 (EPTSAPAAPSTTAVPATTTAAVPSTSSAAPSSSSTAPASTGA). Over residues 251–289 (PTSAPAAPSTTAVPATTTAAVPSTSSAAPSSSSTAPAST) the composition is skewed to low complexity. Catalysis depends on Glu-392, which acts as the Proton donor. The active-site Nucleophile is the Glu-488.

Belongs to the glycosyl hydrolase 17 family.

It localises to the secreted. The protein localises to the cell wall. It carries out the reaction Hydrolysis of terminal, non-reducing beta-D-glucosyl residues with release of beta-D-glucose.. Its pathway is glycan metabolism; cellulose degradation. In terms of biological role, beta-glucosidases are one of a number of cellulolytic enzymes involved in the degradation of cellulosic biomass. Catalyzes the last step releasing glucose from the inhibitory cellobiose. The polypeptide is Probable beta-glucosidase btgE (btgE) (Neosartorya fischeri (strain ATCC 1020 / DSM 3700 / CBS 544.65 / FGSC A1164 / JCM 1740 / NRRL 181 / WB 181) (Aspergillus fischerianus)).